A 110-amino-acid chain; its full sequence is Large ribosomal subunit protein uL23c (110 aa).

It belongs to the universal ribosomal protein uL23 family. Part of the 50S ribosomal subunit.

The protein resides in the plastid. Its subcellular location is the chloroplast. Its function is as follows. Binds to 23S rRNA. The chain is Large ribosomal subunit protein uL23c (rpl23) from Porphyra purpurea (Red seaweed).